A 224-amino-acid polypeptide reads, in one-letter code: Protein-L-isoaspartate O-methyltransferase (224 aa).

The active site involves Ser70.

It belongs to the methyltransferase superfamily. L-isoaspartyl/D-aspartyl protein methyltransferase family.

Its subcellular location is the cytoplasm. It catalyses the reaction [protein]-L-isoaspartate + S-adenosyl-L-methionine = [protein]-L-isoaspartate alpha-methyl ester + S-adenosyl-L-homocysteine. Catalyzes the methyl esterification of L-isoaspartyl residues in peptides and proteins that result from spontaneous decomposition of normal L-aspartyl and L-asparaginyl residues. It plays a role in the repair and/or degradation of damaged proteins. The chain is Protein-L-isoaspartate O-methyltransferase from Cellvibrio japonicus (strain Ueda107) (Pseudomonas fluorescens subsp. cellulosa).